A 188-amino-acid chain; its full sequence is RNA 2',3'-cyclic phosphodiesterase (188 aa).

The Proton donor role is filled by H42. 2 short sequence motifs (HXTX) span residues 42–45 and 130–133; these read HMTL and HVTI. The active-site Proton acceptor is H130.

Belongs to the 2H phosphoesterase superfamily. ThpR family.

It catalyses the reaction a 3'-end 2',3'-cyclophospho-ribonucleotide-RNA + H2O = a 3'-end 2'-phospho-ribonucleotide-RNA + H(+). Functionally, hydrolyzes RNA 2',3'-cyclic phosphodiester to an RNA 2'-phosphomonoester. The protein is RNA 2',3'-cyclic phosphodiesterase of Aquifex aeolicus (strain VF5).